The following is a 393-amino-acid chain: Eukaryotic translation initiation factor 5 (393 aa).

28 to 35 (GKGNGIKT) provides a ligand contact to GTP. 2 disordered regions span residues 144–179 (KAVS…DEED) and 217–247 (EPQS…SISS). One can recognise a W2 domain in the interval 223-385 (EEQDEDDEQE…ETAEEEEEDE (163 aa)). The span at 224–233 (EQDEDDEQEE) shows a compositional bias: acidic residues.

The protein belongs to the eIF-2-beta/eIF-5 family.

Functionally, catalyzes the hydrolysis of GTP bound to the 40S ribosomal initiation complex (40S.mRNA.Met-tRNA[F].eIF-2.GTP) with the subsequent joining of a 60S ribosomal subunit resulting in the release of eIF-2 and the guanine nucleotide. The subsequent joining of a 60S ribosomal subunit results in the formation of a functional 80S initiation complex (80S.mRNA.Met-tRNA[F]). In Dictyostelium discoideum (Social amoeba), this protein is Eukaryotic translation initiation factor 5 (eif5).